The sequence spans 93 residues: Small ribosomal subunit protein uS19 (93 aa).

It belongs to the universal ribosomal protein uS19 family.

Its function is as follows. Protein S19 forms a complex with S13 that binds strongly to the 16S ribosomal RNA. This chain is Small ribosomal subunit protein uS19, found in Latilactobacillus sakei subsp. sakei (strain 23K) (Lactobacillus sakei subsp. sakei).